The sequence spans 32 residues: Cytochrome b6-f complex subunit 7 (32 aa).

Residues 5–25 (IFTVAGVMWALVLTGLSVGFG) form a helical membrane-spanning segment.

It belongs to the PetM family. The 4 large subunits of the cytochrome b6-f complex are cytochrome b6, subunit IV (17 kDa polypeptide, PetD), cytochrome f and the Rieske protein, while the 4 small subunits are PetG, PetL, PetM and PetN. The complex functions as a dimer.

The protein localises to the plastid. It is found in the chloroplast thylakoid membrane. Its function is as follows. Component of the cytochrome b6-f complex, which mediates electron transfer between photosystem II (PSII) and photosystem I (PSI), cyclic electron flow around PSI, and state transitions. In Emiliania huxleyi (Coccolithophore), this protein is Cytochrome b6-f complex subunit 7.